A 319-amino-acid polypeptide reads, in one-letter code: Large ribosomal subunit protein uL29m (319 aa).

The segment at 1 to 55 (MWKRSFHSQGGPLRARTKFTKPKPKQPVLPKDKIRPPTQLTHHSNNLRITEPIPP) is disordered. Basic residues predominate over residues 15-24 (ARTKFTKPKP). A compositionally biased stretch (polar residues) spans 38 to 48 (TQLTHHSNNLR).

Belongs to the universal ribosomal protein uL29 family. Component of the mitochondrial large ribosomal subunit. Mature mitochondrial ribosomes consist of a small (37S) and a large (54S) subunit. The 37S subunit contains at least 33 different proteins and 1 molecule of RNA (15S). The 54S subunit contains at least 45 different proteins and 1 molecule of RNA (21S).

It localises to the mitochondrion. The protein is Large ribosomal subunit protein uL29m (MRPL4) of Saccharomyces cerevisiae (strain YJM789) (Baker's yeast).